A 96-amino-acid polypeptide reads, in one-letter code: DNA-directed RNA polymerase subunit Rpo11 (96 aa).

Belongs to the archaeal Rpo11/eukaryotic RPB11/RPC19 RNA polymerase subunit family. As to quaternary structure, part of the RNA polymerase complex.

The protein resides in the cytoplasm. It carries out the reaction RNA(n) + a ribonucleoside 5'-triphosphate = RNA(n+1) + diphosphate. DNA-dependent RNA polymerase (RNAP) catalyzes the transcription of DNA into RNA using the four ribonucleoside triphosphates as substrates. The polypeptide is DNA-directed RNA polymerase subunit Rpo11 (Nanoarchaeum equitans (strain Kin4-M)).